The chain runs to 380 residues: Glutamine synthetase, chloroplastic (380 aa).

Residues 35 to 125 form the GS beta-grasp domain; it reads MAAEYIWADG…VMCEVFAPDG (91 aa). The GS catalytic domain maps to 132-380; that stretch reads TRAKLREIID…RLLIKTVLKG (249 aa).

Belongs to the glutamine synthetase family. As to quaternary structure, homooctamer.

It is found in the plastid. The protein resides in the chloroplast. The catalysed reaction is L-glutamate + NH4(+) + ATP = L-glutamine + ADP + phosphate + H(+). The polypeptide is Glutamine synthetase, chloroplastic (GLN2) (Chlamydomonas reinhardtii (Chlamydomonas smithii)).